The sequence spans 425 residues: MPVDQSFNAPLSEVDPEIAAVLEQELGRQRGTLEMIASENFVPRAVLQSQGSVLTNKYAEGYPGRRYYGGCEFVDVAEQLAIDRAKSLFGAEFANVQPHSGATANAAVLAAIAQPGDTILGLELAHGGHLTHGMKLNFSGKLYDAAAYGVDPDTFLIDMDVVREKALEHRPQVIIAGWSAYPRHLDFAAFRSIADEVGAKLWVDMAHFAGLVAAGVHPSPVPYADVVSSTVHKTLAGPRSGVILSRDTALAKKLNSAVFPGQQGGPLMHVIAAKATAFKIAATEEFADRQRRTIQGAQILAERLVAADSTEAGVSVLTGGTDVHLVLADLRNSPIDGKQAEDALHEVGITVNRNSVPFDPRPPMVTSGVRIGTSALATRGFGETEFTEVADIIAETLKPGSDLAALRARVLTLTDGFPLYEGLTQ.

Residues leucine 124 and 128–130 contribute to the (6S)-5,6,7,8-tetrahydrofolate site; that span reads GHL. The residue at position 233 (lysine 233) is an N6-(pyridoxal phosphate)lysine.

This sequence belongs to the SHMT family. Homodimer. The cofactor is pyridoxal 5'-phosphate.

The protein resides in the cytoplasm. It carries out the reaction (6R)-5,10-methylene-5,6,7,8-tetrahydrofolate + glycine + H2O = (6S)-5,6,7,8-tetrahydrofolate + L-serine. The protein operates within one-carbon metabolism; tetrahydrofolate interconversion. It functions in the pathway amino-acid biosynthesis; glycine biosynthesis; glycine from L-serine: step 1/1. Its function is as follows. Catalyzes the reversible interconversion of serine and glycine with tetrahydrofolate (THF) serving as the one-carbon carrier. This reaction serves as the major source of one-carbon groups required for the biosynthesis of purines, thymidylate, methionine, and other important biomolecules. Also exhibits THF-independent aldolase activity toward beta-hydroxyamino acids, producing glycine and aldehydes, via a retro-aldol mechanism. The protein is Serine hydroxymethyltransferase of Clavibacter sepedonicus (Clavibacter michiganensis subsp. sepedonicus).